Here is a 406-residue protein sequence, read N- to C-terminus: CRISP/Allergen/PR-1 (406 aa).

The N-terminal stretch at 1-18 (MHFQVILMMMWLWLEAEG) is a signal peptide. Asn-39 carries N-linked (GlcNAc...) asparagine glycosylation. One can recognise an SCP domain in the interval 58–205 (LREHNKLRSR…TFKDLYTCNY (148 aa)).

It belongs to the CRISP family. Contains 9 disulfide bonds. As to expression, expressed by the venom gland.

It localises to the secreted. The sequence is that of CRISP/Allergen/PR-1 from Trittame loki (Brush-footed trapdoor spider).